The following is a 241-amino-acid chain: Keratin-associated protein 5-5 (241 aa).

Repeat copies occupy residues 35 to 38, 41 to 44, 47 to 50, 105 to 108, 115 to 118, 133 to 136, 143 to 146, 161 to 164, 171 to 174, 181 to 184, 191 to 194, 201 to 204, 211 to 214, 221 to 224, and 231 to 234. Residues 35–234 form a 15 X 4 AA repeats of C-C-X-P region; the sequence is CCKPVCCCKP…CCCQSSCCAP (200 aa).

Belongs to the KRTAP type 5 family. As to quaternary structure, interacts with hair keratins.

In the hair cortex, hair keratin intermediate filaments are embedded in an interfilamentous matrix, consisting of hair keratin-associated protein (KRTAP), which are essential for the formation of a rigid and resistant hair shaft through their extensive disulfide bond cross-linking with abundant cysteine residues of hair keratins. The matrix proteins include the high-sulfur and high-glycine-tyrosine keratins. The sequence is that of Keratin-associated protein 5-5 from Mus musculus (Mouse).